Here is a 690-residue protein sequence, read N- to C-terminus: uncharacterized protein (690 aa).

This sequence to M.genitalium MG366 and M.pneumoniae MPN544.

This is an uncharacterized protein from Ureaplasma parvum serovar 3 (strain ATCC 700970).